The primary structure comprises 148 residues: Flavodoxin (148 aa).

Residues 4 to 145 enclose the Flavodoxin-like domain; it reads ALIVYGSTTG…DIVGWAHDVR (142 aa).

It belongs to the flavodoxin family. It depends on FMN as a cofactor.

Low-potential electron donor to a number of redox enzymes. This chain is Flavodoxin, found in Nitratidesulfovibrio vulgaris (strain ATCC 29579 / DSM 644 / CCUG 34227 / NCIMB 8303 / VKM B-1760 / Hildenborough) (Desulfovibrio vulgaris).